The chain runs to 165 residues: NADPH-dependent 7-cyano-7-deazaguanine reductase (165 aa).

The active-site Thioimide intermediate is the Cys56. Residue Asp63 is the Proton donor of the active site. Residues 78–80 (VES) and 97–98 (HE) contribute to the substrate site.

Belongs to the GTP cyclohydrolase I family. QueF type 1 subfamily.

The protein resides in the cytoplasm. The catalysed reaction is 7-aminomethyl-7-carbaguanine + 2 NADP(+) = 7-cyano-7-deazaguanine + 2 NADPH + 3 H(+). It participates in tRNA modification; tRNA-queuosine biosynthesis. Functionally, catalyzes the NADPH-dependent reduction of 7-cyano-7-deazaguanine (preQ0) to 7-aminomethyl-7-deazaguanine (preQ1). This is NADPH-dependent 7-cyano-7-deazaguanine reductase from Bacillus cereus (strain ATCC 14579 / DSM 31 / CCUG 7414 / JCM 2152 / NBRC 15305 / NCIMB 9373 / NCTC 2599 / NRRL B-3711).